Reading from the N-terminus, the 156-residue chain is Small ribosomal subunit protein uS7 (156 aa).

This sequence belongs to the universal ribosomal protein uS7 family. As to quaternary structure, part of the 30S ribosomal subunit. Contacts proteins S9 and S11.

In terms of biological role, one of the primary rRNA binding proteins, it binds directly to 16S rRNA where it nucleates assembly of the head domain of the 30S subunit. Is located at the subunit interface close to the decoding center, probably blocks exit of the E-site tRNA. The sequence is that of Small ribosomal subunit protein uS7 from Frankia casuarinae (strain DSM 45818 / CECT 9043 / HFP020203 / CcI3).